The chain runs to 160 residues: Putative UPF0479 protein YIL177W-A (160 aa).

A run of 2 helical transmembrane segments spans residues 39–59 and 136–156; these read IVFC…KVLQ and VPMI…ISQH.

The protein belongs to the UPF0479 family.

It localises to the membrane. In Saccharomyces cerevisiae (strain ATCC 204508 / S288c) (Baker's yeast), this protein is Putative UPF0479 protein YIL177W-A.